Consider the following 438-residue polypeptide: Putative permease HI_0125 (438 aa).

13 helical membrane passes run 21-41 (IIAG…VPNM), 51-71 (SVFI…GLWA), 73-93 (APMA…SLVI), 97-117 (VAIP…TLIS), 137-157 (AGIG…GLVV), 167-187 (LGDF…LIIG), 195-215 (GGIL…DPNV), 238-258 (FMGA…MTAV), 296-316 (LFSG…AAGT), 326-346 (AIVV…AFLV), 347-367 (PGYA…SNVS), 386-406 (FIVL…ALVI), and 418-438 (NVGT…GWAI). An ATP-binding site is contributed by 315 to 322 (GTAAGGKT).

Belongs to the nucleobase:cation symporter-2 (NCS2) (TC 2.A.40) family. Azg-like subfamily.

It is found in the cell membrane. This chain is Putative permease HI_0125, found in Haemophilus influenzae (strain ATCC 51907 / DSM 11121 / KW20 / Rd).